The sequence spans 109 residues: Putative double-stranded DNA mimic protein YciU (109 aa).

Belongs to the putative dsDNA mimic protein family.

Its function is as follows. May act as a double-stranded DNA (dsDNA) mimic. Probably regulates the activity of a dsDNA-binding protein. This is Putative double-stranded DNA mimic protein YciU from Salmonella paratyphi B (strain ATCC BAA-1250 / SPB7).